Here is a 162-residue protein sequence, read N- to C-terminus: Large ribosomal subunit protein eL24 (162 aa).

Disordered stretches follow at residues 64–83 (DIHA…PYSR) and 117–162 (ERIK…GGKR). The span at 71-81 (KKRRRTTKKPY) shows a compositional bias: basic residues. Over residues 117–135 (ERIKKTKDEKKAKKAEVTK) the composition is skewed to basic and acidic residues.

This sequence belongs to the eukaryotic ribosomal protein eL24 family.

It localises to the cytoplasm. The polypeptide is Large ribosomal subunit protein eL24 (RPL24) (Hordeum vulgare (Barley)).